Reading from the N-terminus, the 230-residue chain is Uracil-DNA glycosylase (230 aa).

Aspartate 70 acts as the Proton acceptor in catalysis.

It belongs to the uracil-DNA glycosylase (UDG) superfamily. UNG family.

Its subcellular location is the cytoplasm. The catalysed reaction is Hydrolyzes single-stranded DNA or mismatched double-stranded DNA and polynucleotides, releasing free uracil.. Functionally, excises uracil residues from the DNA which can arise as a result of misincorporation of dUMP residues by DNA polymerase or due to deamination of cytosine. In Pseudomonas entomophila (strain L48), this protein is Uracil-DNA glycosylase.